A 312-amino-acid chain; its full sequence is Glycine--tRNA ligase alpha subunit (312 aa).

It belongs to the class-II aminoacyl-tRNA synthetase family. As to quaternary structure, tetramer of two alpha and two beta subunits.

Its subcellular location is the cytoplasm. It catalyses the reaction tRNA(Gly) + glycine + ATP = glycyl-tRNA(Gly) + AMP + diphosphate. This is Glycine--tRNA ligase alpha subunit from Thiobacillus denitrificans (strain ATCC 25259 / T1).